The chain runs to 409 residues: Argininosuccinate synthase (409 aa).

ATP is bound by residues 8–16 and alanine 34; that span reads AYSGGLDTS. Residue tyrosine 85 participates in L-citrulline binding. Glycine 115 is an ATP binding site. Residues threonine 117, asparagine 121, and aspartate 122 each contribute to the L-aspartate site. Asparagine 121 lines the L-citrulline pocket. L-citrulline contacts are provided by arginine 125, serine 178, serine 187, glutamate 268, and tyrosine 280.

Belongs to the argininosuccinate synthase family. Type 1 subfamily. In terms of assembly, homotetramer.

It localises to the cytoplasm. It carries out the reaction L-citrulline + L-aspartate + ATP = 2-(N(omega)-L-arginino)succinate + AMP + diphosphate + H(+). Its pathway is amino-acid biosynthesis; L-arginine biosynthesis; L-arginine from L-ornithine and carbamoyl phosphate: step 2/3. This is Argininosuccinate synthase from Thermotoga petrophila (strain ATCC BAA-488 / DSM 13995 / JCM 10881 / RKU-1).